Consider the following 393-residue polypeptide: Beta-ureidopropionase (393 aa).

Positions V72–L344 constitute a CN hydrolase domain. E119 acts as the Proton acceptor in catalysis. The active-site Proton donor is K196. Residue C233 is the Nucleophile of the active site. S378 carries the phosphoserine modification.

It belongs to the carbon-nitrogen hydrolase superfamily. BUP family. Homodimer, homotetramer, homooctamer; can also form higher homooligomers. In terms of processing, the N-terminus is blocked. Detected in liver (at protein level).

The protein resides in the cytoplasm. The catalysed reaction is 3-(carbamoylamino)propanoate + H2O + 2 H(+) = beta-alanine + NH4(+) + CO2. It catalyses the reaction 3-(carbamoylamino)-2-methylpropanoate + H2O + 2 H(+) = (R)-3-amino-2-methylpropanoate + NH4(+) + CO2. The protein operates within amino-acid biosynthesis; beta-alanine biosynthesis. Its activity is regulated as follows. Allosteric enzyme with positive cooperativity toward the substrate N-carbamoyl-beta-alanine at low substrate concentrations (below 12 nM). Displays no cooperativity at substrate levels above 12 nM. Functionally, catalyzes a late step in pyrimidine degradation. Converts N-carbamoyl-beta-alanine (3-ureidopropanoate) into beta-alanine, ammonia and carbon dioxide. Likewise, converts N-carbamoyl-beta-aminoisobutyrate (3-ureidoisobutyrate) into beta-aminoisobutyrate, ammonia and carbon dioxide. The sequence is that of Beta-ureidopropionase (Upb1) from Rattus norvegicus (Rat).